The sequence spans 505 residues: Metalloprotease TIKI1 (505 aa).

Positions 1–19 (MSPWSWFLLQTLCLLPTGA) are cleaved as a signal peptide. Over 20–477 (ASRRGAPGTA…RRGHSHHSQM (458 aa)) the chain is Extracellular. 4 N-linked (GlcNAc...) asparagine glycosylation sites follow: Asn220, Asn229, Asn278, and Asn336. Positions 389 to 428 (PEAVSSGHSTLPPLVSRPGSADTPSEAEQRFRKKRRRSQR) are disordered. Basic residues predominate over residues 419-428 (FRKKRRRSQR). The chain crosses the membrane as a helical span at residues 478–498 (VASSACLSLWTPVFWVLVLAF). Topologically, residues 499–505 (QTETPLL) are cytoplasmic.

This sequence belongs to the TIKI family. Mn(2+) is required as a cofactor. Co(2+) serves as cofactor.

The protein resides in the cell membrane. Metalloprotease that acts as a negative regulator of the Wnt signaling pathway by mediating the cleavage of the 8 N-terminal residues of a subset of Wnt proteins. Following cleavage, Wnt proteins become oxidized and form large disulfide-bond oligomers, leading to their inactivation. Able to cleave WNT3A, WNT5, but not WNT11. Required for head formation. The protein is Metalloprotease TIKI1 (TRABD2A) of Homo sapiens (Human).